Consider the following 499-residue polypeptide: NAD(P)H-quinone oxidoreductase chain 4, chloroplastic (499 aa).

Transmembrane regions (helical) follow at residues 4-24 (FPWL…IFFL), 35-55 (YTIY…CYNF), 84-104 (GLSI…TLAA), 111-129 (SRLF…IGSF), 134-154 (LLLF…LLSV), 167-187 (FILY…GIGL), 208-228 (ALEI…LPII), 242-262 (HYST…YGLI), 272-292 (AHSI…IYAA), 305-325 (IAYS…SITD), 330-350 (GAVL…FLAG), 386-406 (LALP…GIIT), 416-436 (IVIT…SLSM), and 462-482 (LFVL…PDFV).

It belongs to the complex I subunit 4 family.

Its subcellular location is the plastid. It is found in the chloroplast thylakoid membrane. The enzyme catalyses a plastoquinone + NADH + (n+1) H(+)(in) = a plastoquinol + NAD(+) + n H(+)(out). It catalyses the reaction a plastoquinone + NADPH + (n+1) H(+)(in) = a plastoquinol + NADP(+) + n H(+)(out). This Citrus sinensis (Sweet orange) protein is NAD(P)H-quinone oxidoreductase chain 4, chloroplastic.